The following is a 150-amino-acid chain: 3-hydroxyacyl-[acyl-carrier-protein] dehydratase FabZ (150 aa).

His-53 is an active-site residue.

The protein belongs to the thioester dehydratase family. FabZ subfamily.

It localises to the cytoplasm. The catalysed reaction is a (3R)-hydroxyacyl-[ACP] = a (2E)-enoyl-[ACP] + H2O. Its function is as follows. Involved in unsaturated fatty acids biosynthesis. Catalyzes the dehydration of short chain beta-hydroxyacyl-ACPs and long chain saturated and unsaturated beta-hydroxyacyl-ACPs. The protein is 3-hydroxyacyl-[acyl-carrier-protein] dehydratase FabZ of Proteus mirabilis (strain HI4320).